A 313-amino-acid polypeptide reads, in one-letter code: Pantothenate synthetase (313 aa).

Residue 43–50 (MGALHEGH) coordinates ATP. Residue H50 is the Proton donor of the active site. Q75 lines the (R)-pantoate pocket. A beta-alanine-binding site is contributed by Q75. Residue 161 to 164 (GEKD) participates in ATP binding. Residue Q167 coordinates (R)-pantoate. ATP contacts are provided by residues V190 and 198-201 (LSSR).

The protein belongs to the pantothenate synthetase family. In terms of assembly, homodimer.

The protein resides in the cytoplasm. The catalysed reaction is (R)-pantoate + beta-alanine + ATP = (R)-pantothenate + AMP + diphosphate + H(+). Its pathway is cofactor biosynthesis; (R)-pantothenate biosynthesis; (R)-pantothenate from (R)-pantoate and beta-alanine: step 1/1. Functionally, catalyzes the condensation of pantoate with beta-alanine in an ATP-dependent reaction via a pantoyl-adenylate intermediate. This Mycobacterium sp. (strain JLS) protein is Pantothenate synthetase.